The chain runs to 236 residues: MTRRYWNINLEEMMEAGVHFGHGTRKWNPRMAPYISAKRKGIHITNLTRTARFLSEACDLVFDAASSGKHFLIVGTKNKAADSVASAAIRARCHYVNKKWLGGMSTNWSTTETRLQKFRDLRAEQKMGRLNRLPKRDAAMLKRQLSRLQTYLGGIKYMTGLPDIVIIVDQQEEYTALRECVTLGIPTICLIDTNCDPDLADISIPANDDAIASIRLILNKLVSAICEGRSGYIRNR.

It belongs to the universal ribosomal protein uS2 family.

The protein resides in the plastid. Its subcellular location is the chloroplast. The polypeptide is Small ribosomal subunit protein uS2c (rps2) (Chloranthus spicatus (Chulantree)).